The chain runs to 118 residues: MARSMNLACVALVMCMVVIAPMAEAAVSCGTVTGDLAPCIPYLTGGAGPTDSCCAGVKKLLAAAPTTADRQAACNCLKTAAGNINNLNPGNAAALPGKCNVNIPYKISTTTNCNTIKF.

The N-terminal stretch at 1–25 is a signal peptide; sequence MARSMNLACVALVMCMVVIAPMAEA. Disulfide bonds link cysteine 29/cysteine 76, cysteine 39/cysteine 53, cysteine 54/cysteine 99, and cysteine 74/cysteine 113.

This sequence belongs to the plant LTP family.

Its function is as follows. Plant non-specific lipid-transfer proteins transfer phospholipids as well as galactolipids across membranes. May play a role in wax or cutin deposition in the cell walls of expanding epidermal cells and certain secretory tissues. This Lens culinaris (Lentil) protein is Non-specific lipid-transfer protein 3.